Reading from the N-terminus, the 280-residue chain is Putative pyruvate, phosphate dikinase regulatory protein (280 aa).

158 to 165 contributes to the ADP binding site; sequence GVSRTSKT.

The protein belongs to the pyruvate, phosphate/water dikinase regulatory protein family. PDRP subfamily.

It carries out the reaction N(tele)-phospho-L-histidyl/L-threonyl-[pyruvate, phosphate dikinase] + ADP = N(tele)-phospho-L-histidyl/O-phospho-L-threonyl-[pyruvate, phosphate dikinase] + AMP + H(+). It catalyses the reaction N(tele)-phospho-L-histidyl/O-phospho-L-threonyl-[pyruvate, phosphate dikinase] + phosphate + H(+) = N(tele)-phospho-L-histidyl/L-threonyl-[pyruvate, phosphate dikinase] + diphosphate. Functionally, bifunctional serine/threonine kinase and phosphorylase involved in the regulation of the pyruvate, phosphate dikinase (PPDK) by catalyzing its phosphorylation/dephosphorylation. The chain is Putative pyruvate, phosphate dikinase regulatory protein from Lactobacillus johnsonii (strain CNCM I-12250 / La1 / NCC 533).